The chain runs to 474 residues: ATP synthase subunit beta (474 aa).

Position 151–158 (151–158) interacts with ATP; sequence GGAGVGKT.

Belongs to the ATPase alpha/beta chains family. As to quaternary structure, F-type ATPases have 2 components, CF(1) - the catalytic core - and CF(0) - the membrane proton channel. CF(1) has five subunits: alpha(3), beta(3), gamma(1), delta(1), epsilon(1). CF(0) has four main subunits: a(1), b(1), b'(1) and c(9-12).

It localises to the cell inner membrane. The enzyme catalyses ATP + H2O + 4 H(+)(in) = ADP + phosphate + 5 H(+)(out). Functionally, produces ATP from ADP in the presence of a proton gradient across the membrane. The catalytic sites are hosted primarily by the beta subunits. The polypeptide is ATP synthase subunit beta (Jannaschia sp. (strain CCS1)).